We begin with the raw amino-acid sequence, 310 residues long: N-acetyl-gamma-glutamyl-phosphate reductase (310 aa).

Residue Cys-117 is part of the active site.

Belongs to the NAGSA dehydrogenase family. Type 2 subfamily.

The protein localises to the cytoplasm. It carries out the reaction N-acetyl-L-glutamate 5-semialdehyde + phosphate + NADP(+) = N-acetyl-L-glutamyl 5-phosphate + NADPH + H(+). Its pathway is amino-acid biosynthesis; L-arginine biosynthesis; N(2)-acetyl-L-ornithine from L-glutamate: step 3/4. Catalyzes the NADPH-dependent reduction of N-acetyl-5-glutamyl phosphate to yield N-acetyl-L-glutamate 5-semialdehyde. This Rhizobium etli (strain ATCC 51251 / DSM 11541 / JCM 21823 / NBRC 15573 / CFN 42) protein is N-acetyl-gamma-glutamyl-phosphate reductase.